A 306-amino-acid polypeptide reads, in one-letter code: Agmatinase (306 aa).

Mn(2+) is bound by residues His-126, Asp-149, His-151, Asp-153, Asp-230, and Asp-232.

This sequence belongs to the arginase family. Agmatinase subfamily. It depends on Mn(2+) as a cofactor.

It carries out the reaction agmatine + H2O = urea + putrescine. The protein operates within amine and polyamine biosynthesis; putrescine biosynthesis via agmatine pathway; putrescine from agmatine: step 1/1. In terms of biological role, catalyzes the formation of putrescine from agmatine. The chain is Agmatinase from Shigella dysenteriae serotype 1 (strain Sd197).